Reading from the N-terminus, the 202-residue chain is Type II restriction enzyme MunI (202 aa).

In terms of assembly, homodimer.

It carries out the reaction Endonucleolytic cleavage of DNA to give specific double-stranded fragments with terminal 5'-phosphates.. Functionally, a P subtype restriction enzyme that recognizes the double-stranded sequence 5'-CAATTG-3' and cleaves after C-1. The polypeptide is Type II restriction enzyme MunI (Mycoplasma sp).